Here is a 582-residue protein sequence, read N- to C-terminus: Hemagglutinin-neuraminidase (582 aa).

Over 1-34 (MEPSKLFTMSDNATFAPGPVINAADKKTFRTCFR) the chain is Intravirion. Residues 35–55 (ILVLSVQAVTLILVIVTLGEL) form a helical; Signal-anchor for type II membrane protein membrane-spanning segment. At 56 to 582 (VRMINDQGLS…LPVLTRLTIT (527 aa)) the chain is on the virion surface side. N-linked (GlcNAc...) asparagine; by host glycosylation occurs at Asn-127. Disulfide bonds link Cys-178/Cys-202, Cys-192/Cys-253, and Cys-244/Cys-257. An involved in neuraminidase activity region spans residues 240–245 (NRKSCS). N-linked (GlcNAc...) asparagine; by host glycans are attached at residues Asn-284 and Asn-329. 3 cysteine pairs are disulfide-bonded: Cys-350–Cys-471, Cys-382–Cys-392, and Cys-465–Cys-475. N-linked (GlcNAc...) asparagine; by host glycans are attached at residues Asn-400, Asn-448, and Asn-464. Residue Asn-507 is glycosylated (N-linked (GlcNAc...) asparagine; by host). Cys-545 and Cys-556 are disulfide-bonded.

This sequence belongs to the paramyxoviruses hemagglutinin-neuraminidase family. In terms of assembly, homotetramer; composed of disulfide-linked homodimers. Interacts with F protein trimer.

The protein resides in the virion membrane. It localises to the host cell membrane. It catalyses the reaction Hydrolysis of alpha-(2-&gt;3)-, alpha-(2-&gt;6)-, alpha-(2-&gt;8)- glycosidic linkages of terminal sialic acid residues in oligosaccharides, glycoproteins, glycolipids, colominic acid and synthetic substrates.. Functionally, attaches the virus to alpha-2,3-linked sialic acid-containing cell receptors and thereby initiating infection. Binding of HN protein to the receptor induces a conformational change that allows the F protein to trigger virion/cell membranes fusion. Binds to the glycan motifs sialyl Lewis (SLe) and GM2 ganglioside (GM2-glycan). In terms of biological role, neuraminidase (sialidase) activity ensures the efficient spread of the virus by dissociating the mature virions from the neuraminic acid containing glycoproteins. This Mumps virus genotype B (strain Miyahara vaccine) (MuV) protein is Hemagglutinin-neuraminidase (HN).